We begin with the raw amino-acid sequence, 773 residues long: MQNYQSHSIKVLKGLEGVRKRPGMYIGDTNVGGLHHMVYEVVDNAVDESMAGFCDTINITLTEEGSCIVEDNGRGIPVDIHPTEKIPACTVVLTILHAGGKFDNDTYKVSGGLHGVGVSVVNALSKRLIMTIKKEGQIYRQEFEKGIPISELEIIGKTKSAKESGTTIEFFPDESVMEVVEFQAGILQKRFKEMAYLNDGLKISFKEEKTQLQETYFYKDGLKQFVKDSAKKELLTPIIAFKSMDEETRTSIEVALAYADDYNENTLSFVNNIKTSEGGTHEAGFKMGLSKAILQYIDNNIKTKESRPISEDIKEGLIAVVSLKMSEPLFEGQTKSKLGSSYARALVSKLVYDKIHQFLEENPNEAKIIANKALLAAKAREASKKARELTRKKDNLSVGTLPGKLADCQSKDPLESEIFLVEGDSAGGSAKQGRDRVFQAILPLKGKILNVEKSHLSKILKSEEIKNMITAFGCGIQESFDIERLRYHKIIIMTDADVDGSHIQTLLMTFFYRYLRPLIEQGHVFIAQAPLYKYKKGKTEIYLKDSVALDHFLIEHGINSVDIEGIGKNDLMNLLKVARHYRYTLLELEKRYNLLEVLRFLIETKDALSLDMKVLEKSILEKLEGLNYQILRSFATEESLHLHAQTPKGLVEFNLDDNLFKDVLFEEAHYTYQKLMEYNLDFLENKDILAFLEEVENYAKKGANIQRYKGLGEMNPNDLWETTMHKENRSLIKLKIEDLEKTDAVFSLCMGDEVEPRRAFIQAHAKDVKQLDV.

In terms of domain architecture, Toprim spans 416-530; the sequence is SEIFLVEGDS…QGHVFIAQAP (115 aa). Mg(2+) contacts are provided by Glu422, Asp495, and Asp497.

The protein belongs to the type II topoisomerase GyrB family. Heterotetramer, composed of two GyrA and two GyrB chains. In the heterotetramer, GyrA contains the active site tyrosine that forms a transient covalent intermediate with DNA, while GyrB binds cofactors and catalyzes ATP hydrolysis. The cofactor is Mg(2+). It depends on Mn(2+) as a cofactor. Requires Ca(2+) as cofactor.

The protein resides in the cytoplasm. It catalyses the reaction ATP-dependent breakage, passage and rejoining of double-stranded DNA.. A type II topoisomerase that negatively supercoils closed circular double-stranded (ds) DNA in an ATP-dependent manner to modulate DNA topology and maintain chromosomes in an underwound state. Negative supercoiling favors strand separation, and DNA replication, transcription, recombination and repair, all of which involve strand separation. Also able to catalyze the interconversion of other topological isomers of dsDNA rings, including catenanes and knotted rings. Type II topoisomerases break and join 2 DNA strands simultaneously in an ATP-dependent manner. The sequence is that of DNA gyrase subunit B from Helicobacter pylori (strain J99 / ATCC 700824) (Campylobacter pylori J99).